Here is a 391-residue protein sequence, read N- to C-terminus: MPGNSFGKLFRITTFGESHGPAVGVVIDGVPAGLPLTVEDIKFELEFRRPGRLYVSGRREKDEPEILSGIFNNRTTGSPIAVIVRNTDVISSFYDEIKYKPRPGHADLPFIMKYGYENWDYRGGGRASARETVSRVIAGAVAKKLLMLTDTWIAGHLRSLGPEELSEEVTFEEVLCSKYSPVRASKKDLEEKYEALIKKATQEGDSYGGIAEVIAKNPPIGLGEPVFDKMKAELAKAIMSIPAVMGFEYGLGFIASKMKGSEANDEIIRKNNRIGWKYNYAGGILGGLTNGEDLIVRCAFKPTSSIRKPQKTIDLRNLEESYISVIGRHDPAVAIRGVTVVESMVALTIVDHAMRAGAIPLVKLTEDQANTIQQRWERYVKSCKPMEESQS.

Arg48 contacts NADP(+). FMN is bound by residues 126–128, Gly286, 301–305, and Arg328; these read RAS and KPTSS.

Belongs to the chorismate synthase family. FMNH2 serves as cofactor.

The catalysed reaction is 5-O-(1-carboxyvinyl)-3-phosphoshikimate = chorismate + phosphate. It functions in the pathway metabolic intermediate biosynthesis; chorismate biosynthesis; chorismate from D-erythrose 4-phosphate and phosphoenolpyruvate: step 7/7. Functionally, catalyzes the anti-1,4-elimination of the C-3 phosphate and the C-6 proR hydrogen from 5-enolpyruvylshikimate-3-phosphate (EPSP) to yield chorismate, which is the branch point compound that serves as the starting substrate for the three terminal pathways of aromatic amino acid biosynthesis. This reaction introduces a second double bond into the aromatic ring system. This is Chorismate synthase from Saccharolobus solfataricus (strain ATCC 35092 / DSM 1617 / JCM 11322 / P2) (Sulfolobus solfataricus).